The sequence spans 415 residues: Proline-serine-threonine phosphatase-interacting protein 1 (415 aa).

In terms of domain architecture, F-BAR spans 5-264; the sequence is LQFRDAFWCR…TLEGCDVEGD (260 aa). 2 coiled-coil regions span residues 94–133 and 162–215; these read LALALREELRSLEEFRERQKEQRKKYEAIMDRVQKSKLSL and SANG…TCEA. Residue Ser318 is modified to Phosphoserine. Phosphotyrosine; by ABL1 is present on Tyr344. Residues 358-415 form the SH3 domain; the sequence is SSAQDYRALYDYTAQNSDELDISAGDILAVILEGEDGWWTVERNGQRGFVPGSYLEKL.

Homodimer. Homotrimer. Interacts (via coiled-coil domain) with CD2AP, PTPN12 and PTPN18. Interacts (via SH3 domain) with ABL1 and WAS. Interacts (via SH3 and coiled-coil domains) with MEFV (via B-box zinc finger); the interaction allows binding of MEFV to PYCARD and facilitates formation of PYCARD pyroptosomes. Interacts with DNM2 and FASLG. Interacts with CD2. Dephosphorylated on Tyr-344 by PTPN18, this event negatively regulates the association of PSTPIP1 with SH2 domain-containing proteins as tyrosine kinase. Phosphorylation of Tyr-344 is probably required for subsequent phosphorylation at other tyrosine residues. Phosphorylation is induced by activation of the EGFR and PDGFR in a ABL1 dependent manner. The phosphorylation regulates the interaction with WAS and with MEFV. Highly expressed in adult lung and spleen, and weakly expressed in testis, muscle, kidney, brain and heart. Highly expressed in spleen and thymus, moderately in lung, brain and muscle, and weakly expressed in heart and liver (at protein level).

Its subcellular location is the cytoplasm. It is found in the perinuclear region. The protein localises to the cell projection. It localises to the lamellipodium. The protein resides in the cleavage furrow. Its subcellular location is the cytoskeleton. It is found in the cell membrane. The protein localises to the uropodium. Its function is as follows. Involved in regulation of the actin cytoskeleton. May regulate WAS actin-bundling activity. Bridges the interaction between ABL1 and PTPN18 leading to ABL1 dephosphorylation. May play a role as a scaffold protein between PTPN12 and WAS and allow PTPN12 to dephosphorylate WAS. Has the potential to physically couple CD2 and CD2AP to WAS. Acts downstream of CD2 and CD2AP to recruit WAS to the T-cell:APC contact site so as to promote the actin polymerization required for synapse induction during T-cell activation. Down-regulates CD2-stimulated adhesion through the coupling of PTPN12 to CD2. Also has a role in innate immunity and the inflammatory response. Recruited to inflammasomes by MEFV. Induces formation of pyroptosomes, large supramolecular structures composed of oligomerized PYCARD dimers which form prior to inflammatory apoptosis. Binding to MEFV allows MEFV to bind to PYCARD and facilitates pyroptosome formation. Regulates endocytosis and cell migration in neutrophils. The polypeptide is Proline-serine-threonine phosphatase-interacting protein 1 (Pstpip1) (Mus musculus (Mouse)).